Reading from the N-terminus, the 354-residue chain is Probable trehalose-phosphate phosphatase E (354 aa).

Belongs to the trehalose phosphatase family. A divalent metal cation is required as a cofactor.

The enzyme catalyses alpha,alpha-trehalose 6-phosphate + H2O = alpha,alpha-trehalose + phosphate. The protein operates within glycan biosynthesis; trehalose biosynthesis. In terms of biological role, removes the phosphate from trehalose 6-phosphate to produce free trehalose. Trehalose accumulation in plant may improve abiotic stress tolerance. The polypeptide is Probable trehalose-phosphate phosphatase E (TPPE) (Arabidopsis thaliana (Mouse-ear cress)).